A 439-amino-acid chain; its full sequence is Oxysterol-binding protein 6 (439 aa).

2 disordered regions span residues methionine 1–aspartate 40 and glutamate 409–asparagine 439. Composition is skewed to polar residues over residues glutamate 409–aspartate 419 and proline 429–asparagine 439.

It belongs to the OSBP family.

This Dictyostelium discoideum (Social amoeba) protein is Oxysterol-binding protein 6 (osbF).